Consider the following 339-residue polypeptide: Ribosomal RNA large subunit methyltransferase F (339 aa).

The segment at 1 to 26 (MTAPSTPKPQRKKPKTATTAKPVVPR) is disordered.

It belongs to the methyltransferase superfamily. METTL16/RlmF family.

Its subcellular location is the cytoplasm. The enzyme catalyses adenosine(1618) in 23S rRNA + S-adenosyl-L-methionine = N(6)-methyladenosine(1618) in 23S rRNA + S-adenosyl-L-homocysteine + H(+). Its function is as follows. Specifically methylates the adenine in position 1618 of 23S rRNA. The polypeptide is Ribosomal RNA large subunit methyltransferase F (Pseudomonas fluorescens (strain SBW25)).